Reading from the N-terminus, the 130-residue chain is Small ribosomal subunit protein uS8 (130 aa).

It belongs to the universal ribosomal protein uS8 family. Part of the 30S ribosomal subunit.

In terms of biological role, one of the primary rRNA binding proteins, it binds directly to 16S rRNA central domain where it helps coordinate assembly of the platform of the 30S subunit. The sequence is that of Small ribosomal subunit protein uS8 from Methanocella arvoryzae (strain DSM 22066 / NBRC 105507 / MRE50).